A 250-amino-acid polypeptide reads, in one-letter code: Manganese transport system ATP-binding protein MntB (250 aa).

Residues 4 to 236 (VELDNVTVAY…NLQKTYGGRL (233 aa)) enclose the ABC transporter domain. 36-43 (GPNGAGKS) contacts ATP.

The protein belongs to the ABC transporter superfamily. In terms of assembly, the complex is probably composed of two ATP-binding proteins (MntB), two transmembrane proteins (MntC and MntD) and a solute-binding protein (MntA).

It is found in the cell membrane. Functionally, probably part of the ABC transporter complex MntABCD involved in manganese import. Probably responsible for energy coupling to the transport system. The sequence is that of Manganese transport system ATP-binding protein MntB from Bacillus subtilis (strain 168).